Here is a 334-residue protein sequence, read N- to C-terminus: Holliday junction branch migration complex subunit RuvB (334 aa).

Residues 1-182 (MNERMVDQSM…FGVHLRLEYY (182 aa)) are large ATPase domain (RuvB-L). Residues L21, R22, G63, K66, T67, T68, 129 to 131 (EDF), R172, Y182, and R219 contribute to the ATP site. Position 67 (T67) interacts with Mg(2+). The interval 183 to 253 (NESDLKEIII…TTKHALGLLQ (71 aa)) is small ATPAse domain (RuvB-S). The head domain (RuvB-H) stretch occupies residues 256–334 (QHGLDYIDHK…HFAKSNEERG (79 aa)). Positions 292, 311, and 316 each coordinate DNA.

The protein belongs to the RuvB family. As to quaternary structure, homohexamer. Forms an RuvA(8)-RuvB(12)-Holliday junction (HJ) complex. HJ DNA is sandwiched between 2 RuvA tetramers; dsDNA enters through RuvA and exits via RuvB. An RuvB hexamer assembles on each DNA strand where it exits the tetramer. Each RuvB hexamer is contacted by two RuvA subunits (via domain III) on 2 adjacent RuvB subunits; this complex drives branch migration. In the full resolvosome a probable DNA-RuvA(4)-RuvB(12)-RuvC(2) complex forms which resolves the HJ.

It is found in the cytoplasm. The catalysed reaction is ATP + H2O = ADP + phosphate + H(+). The RuvA-RuvB-RuvC complex processes Holliday junction (HJ) DNA during genetic recombination and DNA repair, while the RuvA-RuvB complex plays an important role in the rescue of blocked DNA replication forks via replication fork reversal (RFR). RuvA specifically binds to HJ cruciform DNA, conferring on it an open structure. The RuvB hexamer acts as an ATP-dependent pump, pulling dsDNA into and through the RuvAB complex. RuvB forms 2 homohexamers on either side of HJ DNA bound by 1 or 2 RuvA tetramers; 4 subunits per hexamer contact DNA at a time. Coordinated motions by a converter formed by DNA-disengaged RuvB subunits stimulates ATP hydrolysis and nucleotide exchange. Immobilization of the converter enables RuvB to convert the ATP-contained energy into a lever motion, pulling 2 nucleotides of DNA out of the RuvA tetramer per ATP hydrolyzed, thus driving DNA branch migration. The RuvB motors rotate together with the DNA substrate, which together with the progressing nucleotide cycle form the mechanistic basis for DNA recombination by continuous HJ branch migration. Branch migration allows RuvC to scan DNA until it finds its consensus sequence, where it cleaves and resolves cruciform DNA. The chain is Holliday junction branch migration complex subunit RuvB from Staphylococcus aureus (strain N315).